The primary structure comprises 527 residues: Light-independent protochlorophyllide reductase subunit B (527 aa).

Position 36 (Asp-36) interacts with [4Fe-4S] cluster. Asp-292 serves as the catalytic Proton donor. A substrate-binding site is contributed by 428–429; the sequence is GL.

It belongs to the ChlB/BchB/BchZ family. Protochlorophyllide reductase is composed of three subunits; BchL, BchN and BchB. Forms a heterotetramer of two BchB and two BchN subunits. Requires [4Fe-4S] cluster as cofactor.

It catalyses the reaction chlorophyllide a + oxidized 2[4Fe-4S]-[ferredoxin] + 2 ADP + 2 phosphate = protochlorophyllide a + reduced 2[4Fe-4S]-[ferredoxin] + 2 ATP + 2 H2O. It functions in the pathway porphyrin-containing compound metabolism; bacteriochlorophyll biosynthesis (light-independent). Component of the dark-operative protochlorophyllide reductase (DPOR) that uses Mg-ATP and reduced ferredoxin to reduce ring D of protochlorophyllide (Pchlide) to form chlorophyllide a (Chlide). This reaction is light-independent. The NB-protein (BchN-BchB) is the catalytic component of the complex. The chain is Light-independent protochlorophyllide reductase subunit B from Chlorobium phaeovibrioides (strain DSM 265 / 1930) (Prosthecochloris vibrioformis (strain DSM 265)).